The sequence spans 442 residues: GDP-L-galactose phosphorylase 1 (442 aa).

H238 (tele-GMP-histidine intermediate) is an active-site residue.

This sequence belongs to the GDPGP1 family. As to quaternary structure, interacts with TLP1. As to expression, expressed in leaves, stems, roots, flowers and siliques. Highest expression in green tissues.

It localises to the cytoplasm. The protein resides in the nucleus. It carries out the reaction GDP-beta-L-galactose + phosphate = beta-L-galactose 1-phosphate + GDP + H(+). The protein operates within cofactor biosynthesis; L-ascorbate biosynthesis via GDP-alpha-D-mannose pathway; L-ascorbate from GDP-alpha-D-mannose: step 2/5. Not inhibited by dithiothreitol, N-ethylmaleimide, phenylmethane sulfonyl fluoride, ascorbate, L-galactose and L-galactonolactone. In terms of biological role, catalyzes a reaction of the Smirnoff-Wheeler pathway, the major route to ascorbate biosynthesis in plants. Acts as a phosphorylase rather than as a transferase. Uses preferentially GDP-L-galactose and GDP-D-glucose as substrates. Lower activity with GDP-L-fucose, very low activity with GDP-D-mannose, and no activity with UDP-D-glucose, UDP-D-galactose or ADP-D-glucose. Highly specific for inorganic phosphate as the guanylyl acceptor. This is GDP-L-galactose phosphorylase 1 (VTC2) from Arabidopsis thaliana (Mouse-ear cress).